The following is a 351-amino-acid chain: Farnesyl pyrophosphate synthase (351 aa).

3 residues coordinate isopentenyl diphosphate: K51, R54, and Q92. 2 residues coordinate Mg(2+): D99 and D103. Residue R108 participates in dimethylallyl diphosphate binding. R109 serves as a coordination point for isopentenyl diphosphate. The dimethylallyl diphosphate site is built by K196, T197, Q236, K253, and K262.

This sequence belongs to the FPP/GGPP synthase family. Requires Mg(2+) as cofactor.

The enzyme catalyses isopentenyl diphosphate + dimethylallyl diphosphate = (2E)-geranyl diphosphate + diphosphate. It carries out the reaction isopentenyl diphosphate + (2E)-geranyl diphosphate = (2E,6E)-farnesyl diphosphate + diphosphate. It functions in the pathway isoprenoid biosynthesis; farnesyl diphosphate biosynthesis; farnesyl diphosphate from geranyl diphosphate and isopentenyl diphosphate: step 1/1. The protein operates within isoprenoid biosynthesis; geranyl diphosphate biosynthesis; geranyl diphosphate from dimethylallyl diphosphate and isopentenyl diphosphate: step 1/1. In terms of biological role, farnesyl pyrophosphate synthase; part of the second module of ergosterol biosynthesis pathway that includes the middle steps of the pathway. ERG20 catalyzes the sequential condensation of isopentenyl pyrophosphate with dimethylallyl pyrophosphate, and then with the resultant geranylpyrophosphate to the ultimate product farnesyl pyrophosphate. The second module is carried out in the vacuole and involves the formation of farnesyl diphosphate, which is also an important intermediate in the biosynthesis of ubiquinone, dolichol, heme and prenylated proteins. Activity by the mevalonate kinase ERG12 first converts mevalonate into 5-phosphomevalonate. 5-phosphomevalonate is then further converted to 5-diphosphomevalonate by the phosphomevalonate kinase ERG8. The diphosphomevalonate decarboxylase MVD then produces isopentenyl diphosphate. The isopentenyl-diphosphate delta-isomerase IDI1 then catalyzes the 1,3-allylic rearrangement of the homoallylic substrate isopentenyl (IPP) to its highly electrophilic allylic isomer, dimethylallyl diphosphate (DMAPP). Finally the farnesyl diphosphate synthase ERG20 catalyzes the sequential condensation of isopentenyl pyrophosphate with dimethylallyl pyrophosphate, and then with the resultant geranylpyrophosphate to the ultimate product farnesyl pyrophosphate. The polypeptide is Farnesyl pyrophosphate synthase (Candida albicans (strain SC5314 / ATCC MYA-2876) (Yeast)).